We begin with the raw amino-acid sequence, 187 residues long: UPF0340 protein stu1894 (187 aa).

It belongs to the UPF0340 family.

In Streptococcus thermophilus (strain ATCC BAA-250 / LMG 18311), this protein is UPF0340 protein stu1894.